The following is a 526-amino-acid chain: Rho guanine nucleotide exchange factor 3 (526 aa).

Residues 20-40 (ELPPASGPAKDAEEPSNKRVK) are disordered. A phosphoserine mark is found at serine 47 and serine 70. The region spanning 122–304 (KRQEAIFELS…QGIVAEINTK (183 aa)) is the DH domain. The 159-residue stretch at 291-449 (INIIQGIVAE…WLNCIRQAKE (159 aa)) folds into the PH domain. A disordered region spans residues 464–526 (EGSFLNPTTG…GNSRHGESNV (63 aa)). The span at 466–475 (SFLNPTTGSR) shows a compositional bias: polar residues.

In terms of assembly, interacts with RHOA and RHOB. In terms of tissue distribution, widely expressed. Highest levels are found in adult brain and skeletal muscle. Lower levels are found in heart and kidney.

It localises to the cytoplasm. In terms of biological role, acts as a guanine nucleotide exchange factor (GEF) for RhoA and RhoB GTPases. In Homo sapiens (Human), this protein is Rho guanine nucleotide exchange factor 3 (ARHGEF3).